Reading from the N-terminus, the 697-residue chain is Lebercilin (697 aa).

The tract at residues 1–90 is disordered; that stretch reads MGERAGSPGT…VGFRSQSLNR (90 aa). Residues S7 and S45 each carry the phosphoserine modification. Low complexity predominate over residues 32 to 45; the sequence is SSGRSSLVSSSPAS. 2 coiled-coil regions span residues 103–297 and 389–485; these read RILS…IKNI and EEKF…RNLK. Disordered regions lie at residues 412–432, 522–548, and 606–697; these read WEREELDKKQKEKASLLEREE, HHLQDISFSTPKGEGQNSGNVRSPASP, and EQLF…VALR. A compositionally biased stretch (basic and acidic residues) spans 416 to 432; it reads ELDKKQKEKASLLEREE. Residues 527–547 show a composition bias toward polar residues; that stretch reads ISFSTPKGEGQNSGNVRSPAS. Over residues 612 to 626 the composition is skewed to low complexity; it reads SGSSTISSKSSDPNS. Residues 686-697 are compositionally biased toward acidic residues; it reads SVEDEIEEVALR.

The protein belongs to the LCA5 family. Interacts with NINL. Interacts with OFD1. Interacts with FAM161A. Interacts with components of the IFT complex B. Widely expressed.

Its subcellular location is the cytoplasm. It localises to the cytoskeleton. The protein localises to the cilium axoneme. The protein resides in the cilium basal body. It is found in the microtubule organizing center. Its subcellular location is the centrosome. It localises to the cell projection. The protein localises to the cilium. Involved in intraflagellar protein (IFT) transport in photoreceptor cilia. The protein is Lebercilin (LCA5) of Homo sapiens (Human).